A 43-amino-acid polypeptide reads, in one-letter code: Structural protein ORF5a (43 aa).

The helical transmembrane segment at 2–22 (FSQIGAFLDSALLLLVAFFAV) threads the bilayer.

It belongs to the arteriviridae ORF5a protein family. Interacts with proteins GP2B and GP4.

The protein localises to the virion. It localises to the host cell membrane. Minor virion component that plays an essential role in virus infectivity. This is Structural protein ORF5a from Sus scrofa (Pig).